A 426-amino-acid chain; its full sequence is Phosphomethylpyrimidine synthase (426 aa).

Substrate-binding positions include Asn-65, Met-94, Tyr-123, His-162, 184–186, 225–228, and Glu-264; these read SRG and DGMR. His-268 provides a ligand contact to Zn(2+). Tyr-291 serves as a coordination point for substrate. Residue His-332 coordinates Zn(2+). Residues Cys-408, Cys-411, and Cys-415 each contribute to the [4Fe-4S] cluster site.

The protein belongs to the ThiC family. [4Fe-4S] cluster serves as cofactor.

The catalysed reaction is 5-amino-1-(5-phospho-beta-D-ribosyl)imidazole + S-adenosyl-L-methionine = 4-amino-2-methyl-5-(phosphooxymethyl)pyrimidine + CO + 5'-deoxyadenosine + formate + L-methionine + 3 H(+). Its pathway is cofactor biosynthesis; thiamine diphosphate biosynthesis. Its function is as follows. Catalyzes the synthesis of the hydroxymethylpyrimidine phosphate (HMP-P) moiety of thiamine from aminoimidazole ribotide (AIR) in a radical S-adenosyl-L-methionine (SAM)-dependent reaction. The polypeptide is Phosphomethylpyrimidine synthase (Methanococcus maripaludis (strain DSM 14266 / JCM 13030 / NBRC 101832 / S2 / LL)).